We begin with the raw amino-acid sequence, 351 residues long: MSVRNSRPQLSWPERVSPQRTIDTPTASGEMLTRRQSAPALVVPPEETTHVVVVKRQSPDAAAAGELVPSRRKDSVAVQSGIVATGPLDTTRSGARDDFLMALLECPVCFGYIMPPIMQCPRGHLICSTCRSKLTICPVCRVFMTNIRSLAMEKVASKLIFPCKHSHFGCRARLSYAEKTKHEEDCECRPYFCPYPDDKCSWQGPLRDVYQHLMSSHENVITMEGNDIIFLATNVNLEGALDWTMVQSCHGRHFLLSLEKINLGEDCQQYFTACRMIGSMKDAAEFVYNISLEAYNRTLRWQSKPRSIRENFSSFTNADFLVLNKHTVELFSEDGNLALNVVIRKVEERTN.

Residues 1–38 (MSVRNSRPQLSWPERVSPQRTIDTPTASGEMLTRRQSA) form a disordered region. Residues 18 to 27 (PQRTIDTPTA) show a composition bias toward polar residues. The RING-type zinc-finger motif lies at 106 to 141 (CPVCFGYIMPPIMQCPRGHLICSTCRSKLTICPVCR). The interval 155 to 346 (VASKLIFPCK…LALNVVIRKV (192 aa)) is SBD. An SIAH-type zinc finger spans residues 158 to 218 (KLIFPCKHSH…VYQHLMSSHE (61 aa)). Residues cysteine 163, cysteine 170, histidine 182, cysteine 186, cysteine 193, cysteine 200, histidine 212, and histidine 217 each coordinate Zn(2+).

Belongs to the SINA (Seven in absentia) family. As to quaternary structure, interacts with ebi and phyl.

It catalyses the reaction S-ubiquitinyl-[E2 ubiquitin-conjugating enzyme]-L-cysteine + [acceptor protein]-L-lysine = [E2 ubiquitin-conjugating enzyme]-L-cysteine + N(6)-ubiquitinyl-[acceptor protein]-L-lysine.. Its pathway is protein modification; protein ubiquitination. E3 ubiquitin-protein ligase that mediates ubiquitination and subsequent proteasomal degradation of target proteins. The adapter phyl is required to direct the degradation of the two isoforms of the transcriptional repressor Tramtrack (Ttk). E3 ubiquitin ligases accept ubiquitin from an E2 ubiquitin-conjugating enzyme in the form of a thioester and then directly transfers the ubiquitin to targeted substrates. It probably triggers the ubiquitin-mediated degradation of different substrates. A phyl-independent mechanism of degradation exists for isoform beta of ttk that involves motifs in the C-terminus of ttk. The protein is Probable E3 ubiquitin-protein ligase sinah (sinah) of Drosophila melanogaster (Fruit fly).